Reading from the N-terminus, the 99-residue chain is Large ribosomal subunit protein bL27 (99 aa).

The segment at 1–21 (MAHKKGGGSTRNGRDSRAKRL) is disordered.

Belongs to the bacterial ribosomal protein bL27 family.

The protein is Large ribosomal subunit protein bL27 of Thermomicrobium roseum (strain ATCC 27502 / DSM 5159 / P-2).